The sequence spans 364 residues: DNA polymerase IV (364 aa).

Residues 14–198 (IIHIDMDAFF…LPIEKFHGVG (185 aa)) enclose the UmuC domain. Positions 18 and 116 each coordinate Mg(2+). The active site involves Glu-117.

Belongs to the DNA polymerase type-Y family. As to quaternary structure, monomer. Requires Mg(2+) as cofactor.

Its subcellular location is the cytoplasm. The catalysed reaction is DNA(n) + a 2'-deoxyribonucleoside 5'-triphosphate = DNA(n+1) + diphosphate. Its function is as follows. Poorly processive, error-prone DNA polymerase involved in untargeted mutagenesis. Copies undamaged DNA at stalled replication forks, which arise in vivo from mismatched or misaligned primer ends. These misaligned primers can be extended by PolIV. Exhibits no 3'-5' exonuclease (proofreading) activity. May be involved in translesional synthesis, in conjunction with the beta clamp from PolIII. This Streptococcus pyogenes serotype M2 (strain MGAS10270) protein is DNA polymerase IV.